A 378-amino-acid polypeptide reads, in one-letter code: Succinyl-diaminopimelate desuccinylase (378 aa).

Position 67 (His67) interacts with Zn(2+). The active site involves Asp69. Asp100 lines the Zn(2+) pocket. Glu134 (proton acceptor) is an active-site residue. Zn(2+) contacts are provided by Glu135, Glu163, and His349.

It belongs to the peptidase M20A family. DapE subfamily. Homodimer. Zn(2+) serves as cofactor. The cofactor is Co(2+).

The enzyme catalyses N-succinyl-(2S,6S)-2,6-diaminopimelate + H2O = (2S,6S)-2,6-diaminopimelate + succinate. The protein operates within amino-acid biosynthesis; L-lysine biosynthesis via DAP pathway; LL-2,6-diaminopimelate from (S)-tetrahydrodipicolinate (succinylase route): step 3/3. Catalyzes the hydrolysis of N-succinyl-L,L-diaminopimelic acid (SDAP), forming succinate and LL-2,6-diaminopimelate (DAP), an intermediate involved in the bacterial biosynthesis of lysine and meso-diaminopimelic acid, an essential component of bacterial cell walls. This chain is Succinyl-diaminopimelate desuccinylase, found in Pasteurella multocida (strain Pm70).